A 457-amino-acid chain; its full sequence is Bifunctional protein GlmU (457 aa).

A pyrophosphorylase region spans residues 1–232 (MAKVAAIVLA…PMEVMGVNDR (232 aa)). Residues 9–12 (LAAG), Lys-23, Gln-75, and 80–81 (GT) contribute to the UDP-N-acetyl-alpha-D-glucosamine site. Position 105 (Asp-105) interacts with Mg(2+). Residues Gly-142, Glu-157, Asn-172, and Asn-230 each contribute to the UDP-N-acetyl-alpha-D-glucosamine site. Asn-230 contributes to the Mg(2+) binding site. Residues 233–253 (VQLAEAGRIIRVRINKALMVA) form a linker region. Residues 254–457 (GTTIIDPETT…NKEGWKLKNK (204 aa)) are N-acetyltransferase. UDP-N-acetyl-alpha-D-glucosamine is bound by residues Arg-336 and Lys-354. His-366 (proton acceptor) is an active-site residue. Positions 369 and 380 each coordinate UDP-N-acetyl-alpha-D-glucosamine. Acetyl-CoA-binding positions include 389–390 (NY), Ser-408, Ala-426, and Arg-443.

It in the N-terminal section; belongs to the N-acetylglucosamine-1-phosphate uridyltransferase family. The protein in the C-terminal section; belongs to the transferase hexapeptide repeat family. As to quaternary structure, homotrimer. Mg(2+) serves as cofactor.

It is found in the cytoplasm. The catalysed reaction is alpha-D-glucosamine 1-phosphate + acetyl-CoA = N-acetyl-alpha-D-glucosamine 1-phosphate + CoA + H(+). It catalyses the reaction N-acetyl-alpha-D-glucosamine 1-phosphate + UTP + H(+) = UDP-N-acetyl-alpha-D-glucosamine + diphosphate. It functions in the pathway nucleotide-sugar biosynthesis; UDP-N-acetyl-alpha-D-glucosamine biosynthesis; N-acetyl-alpha-D-glucosamine 1-phosphate from alpha-D-glucosamine 6-phosphate (route II): step 2/2. Its pathway is nucleotide-sugar biosynthesis; UDP-N-acetyl-alpha-D-glucosamine biosynthesis; UDP-N-acetyl-alpha-D-glucosamine from N-acetyl-alpha-D-glucosamine 1-phosphate: step 1/1. It participates in bacterial outer membrane biogenesis; LPS lipid A biosynthesis. Functionally, catalyzes the last two sequential reactions in the de novo biosynthetic pathway for UDP-N-acetylglucosamine (UDP-GlcNAc). The C-terminal domain catalyzes the transfer of acetyl group from acetyl coenzyme A to glucosamine-1-phosphate (GlcN-1-P) to produce N-acetylglucosamine-1-phosphate (GlcNAc-1-P), which is converted into UDP-GlcNAc by the transfer of uridine 5-monophosphate (from uridine 5-triphosphate), a reaction catalyzed by the N-terminal domain. This Geotalea daltonii (strain DSM 22248 / JCM 15807 / FRC-32) (Geobacter daltonii) protein is Bifunctional protein GlmU.